The following is a 305-amino-acid chain: MATAAYLNSPSLQQRLIGYARVSTEDQLNDAQVDELRAAGCHRIHQEHGSGASRARPVLAKLLKDLAMGDVLVVVRLDRLARSVSHLLDVIEDLEKRGVHFRSLRDPIDTSTPHGMFSLQVLGAVAQLERALIAERTKSGMQAAKARGRLAGNPGLRERRPEAIRAVSAARERAYLDELIVSAQTWLPTVRRLRPRHSWDNVVRILNRRGHDWTVERLRRAVHRLVREKLAEPELLARSLRRPPEDHLMRLVAGIAIADPNLSLRDIAAQLDQMQERPPRGGRKWQPSSVRALLDEASRIGLVRA.

Residues 15–148 enclose the Resolvase/invertase-type recombinase catalytic domain; the sequence is RLIGYARVST…SGMQAAKARG (134 aa). The O-(5'-phospho-DNA)-serine intermediate role is filled by S23.

It belongs to the site-specific recombinase resolvase family.

This chain is Probable DNA-invertase y4cG, found in Sinorhizobium fredii (strain NBRC 101917 / NGR234).